Consider the following 317-residue polypeptide: Multivesicular body subunit 12B (317 aa).

The interval 1–49 is disordered; it reads MRSCFCVRRSRDPPPPQPPPPQRGTDQATMPEVKELSEALPETPMDPIT. A compositionally biased stretch (pro residues) spans 13–22; it reads PPPPQPPPPQ. Residues 45–191 form the MABP domain; sequence MDPITGVGVV…SMGIWYRMGR (147 aa). Ser-99 carries the phosphoserine modification. 3 positions are modified to phosphothreonine: Thr-120, Thr-202, and Thr-203. The interval 193–218 is disordered; that stretch reads PRNHDSSQPTTPSQSSASSTPAPNLP. The segment covering 198-214 has biased composition (low complexity); sequence SSQPTTPSQSSASSTPA. A Phosphoserine modification is found at Ser-222. In terms of domain architecture, UMA spans 252–301; sequence MDGVPFMISEKFSCIPESMQPFDLLGITIKSLAEIEKEYEYSFRTEQSAA. The interval 297-317 is disordered; it reads EQSAAARLPPSPTRCQQIPQS. Ser-307 is subject to Phosphoserine.

It belongs to the MVB12 family. As to quaternary structure, component of the ESCRT-I complex (endosomal sorting complex required for transport I) which consists of TSG101, VPS28, a VPS37 protein (VPS37A to -D) and MVB12A or MVB12B in a 1:1:1:1 stoichiometry. Interacts with TSG101; the association appears to be mediated by the TSG101-VPS37 binary subcomplex. Interacts with VPS28. Interacts with VPS37B; the association appears to be mediated by the TSG101-VPS37 binary subcomplex. Interacts with VPS37C; the association appears to be mediated by the TSG101-VPS37 binary subcomplex.

The protein resides in the endosome. The protein localises to the late endosome membrane. Functionally, component of the ESCRT-I complex, a regulator of vesicular trafficking process. Required for the sorting of endocytic ubiquitinated cargos into multivesicular bodies. This Mus musculus (Mouse) protein is Multivesicular body subunit 12B (Mvb12b).